Reading from the N-terminus, the 163-residue chain is MEFHFDATFFAFVGLILFLALVVYLKVPGMMARSLDDRADQIRNELAEAKRLREEAQHLLAEYQRKRKEAEAEAAHIVAAAEREAEMLTAEAKKKTEEFVANRTALSEQKIKQAEADAMKAVRSAAVDLAIAAAETVLAKKADGKVQSELFGNAVGQVKTRLN.

The helical transmembrane segment at 5-25 (FDATFFAFVGLILFLALVVYL) threads the bilayer.

This sequence belongs to the ATPase B chain family. F-type ATPases have 2 components, F(1) - the catalytic core - and F(0) - the membrane proton channel. F(1) has five subunits: alpha(3), beta(3), gamma(1), delta(1), epsilon(1). F(0) has three main subunits: a(1), b(2) and c(10-14). The alpha and beta chains form an alternating ring which encloses part of the gamma chain. F(1) is attached to F(0) by a central stalk formed by the gamma and epsilon chains, while a peripheral stalk is formed by the delta and b chains.

It localises to the cell inner membrane. F(1)F(0) ATP synthase produces ATP from ADP in the presence of a proton or sodium gradient. F-type ATPases consist of two structural domains, F(1) containing the extramembraneous catalytic core and F(0) containing the membrane proton channel, linked together by a central stalk and a peripheral stalk. During catalysis, ATP synthesis in the catalytic domain of F(1) is coupled via a rotary mechanism of the central stalk subunits to proton translocation. In terms of biological role, component of the F(0) channel, it forms part of the peripheral stalk, linking F(1) to F(0). This Rhizobium etli (strain ATCC 51251 / DSM 11541 / JCM 21823 / NBRC 15573 / CFN 42) protein is ATP synthase subunit b 1.